A 247-amino-acid chain; its full sequence is 2,3-bisphosphoglycerate-dependent phosphoglycerate mutase (247 aa).

Substrate contacts are provided by residues 8-15 (RHGESQWN), 21-22 (TG), R60, 87-90 (ERHY), K98, 114-115 (RR), and 183-184 (GN). H9 serves as the catalytic Tele-phosphohistidine intermediate. Residue E87 is the Proton donor/acceptor of the active site.

Belongs to the phosphoglycerate mutase family. BPG-dependent PGAM subfamily.

It carries out the reaction (2R)-2-phosphoglycerate = (2R)-3-phosphoglycerate. It functions in the pathway carbohydrate degradation; glycolysis; pyruvate from D-glyceraldehyde 3-phosphate: step 3/5. In terms of biological role, catalyzes the interconversion of 2-phosphoglycerate and 3-phosphoglycerate. The protein is 2,3-bisphosphoglycerate-dependent phosphoglycerate mutase of Chlorobium phaeovibrioides (strain DSM 265 / 1930) (Prosthecochloris vibrioformis (strain DSM 265)).